Reading from the N-terminus, the 43-residue chain is CLAVATA3/ESR (CLE)-related protein 16D10 (43 aa).

The first 30 residues, 1–30 (MFTNSIKNLIIYLMPLMVTLMLLSVSFVDA), serve as a signal peptide directing secretion. The short motif at 31 to 43 (GKKPSGPNPGGNN) is the CLE element.

Belongs to the CLV3/ESR signal peptide family. As to expression, highly expressed exclusively within the subventral esophageal gland cell during syncytium formation in host plants.

The protein resides in the secreted. The protein localises to the host cytoplasm. It localises to the host extracellular space. Its function is as follows. Plays a role in the differentiation or division of feeding cells (syncytia) induced in plant roots during infection. Promotes host root growth. The sequence is that of CLAVATA3/ESR (CLE)-related protein 16D10 (16D10) from Meloidogyne arenaria (Peanut root-knot nematode).